We begin with the raw amino-acid sequence, 690 residues long: Glycine--tRNA ligase beta subunit (690 aa).

It belongs to the class-II aminoacyl-tRNA synthetase family. As to quaternary structure, tetramer of two alpha and two beta subunits.

The protein resides in the cytoplasm. It catalyses the reaction tRNA(Gly) + glycine + ATP = glycyl-tRNA(Gly) + AMP + diphosphate. The protein is Glycine--tRNA ligase beta subunit of Buchnera aphidicola subsp. Acyrthosiphon pisum (strain 5A).